A 75-amino-acid chain; its full sequence is Translational regulator CsrA (75 aa).

This sequence belongs to the CsrA/RsmA family. Homodimer; the beta-strands of each monomer intercalate to form a hydrophobic core, while the alpha-helices form wings that extend away from the core.

The protein localises to the cytoplasm. Its function is as follows. A translational regulator that binds mRNA to regulate translation initiation and/or mRNA stability. Usually binds in the 5'-UTR at or near the Shine-Dalgarno sequence preventing ribosome-binding, thus repressing translation. Its main target seems to be the major flagellin gene, while its function is anatagonized by FliW. This is Translational regulator CsrA from Exiguobacterium sp. (strain ATCC BAA-1283 / AT1b).